The chain runs to 923 residues: Glucosidase 2 subunit alpha (923 aa).

Positions M1–G25 are cleaved as a signal peptide. N-linked (GlcNAc...) asparagine glycosylation occurs at N262. The Nucleophile role is filled by D524. E527 is a catalytic residue. Residue N563 is glycosylated (N-linked (GlcNAc...) asparagine). The Proton donor role is filled by D600. An N-linked (GlcNAc...) asparagine glycan is attached at N822.

The protein belongs to the glycosyl hydrolase 31 family. Heterodimer of a catalytic subunit alpha (gls2) and a subunit beta (gtb1).

Its subcellular location is the endoplasmic reticulum. It carries out the reaction N(4)-(alpha-D-Glc-(1-&gt;3)-alpha-D-Man-(1-&gt;2)-alpha-D-Man-(1-&gt;2)-alpha-D-Man-(1-&gt;3)-[alpha-D-Man-(1-&gt;2)-alpha-D-Man-(1-&gt;3)-[alpha-D-Man-(1-&gt;2)-alpha-D-Man-(1-&gt;6)]-alpha-D-Man-(1-&gt;6)]-beta-D-Man-(1-&gt;4)-beta-D-GlcNAc-(1-&gt;4)-beta-D-GlcNAc)-L-asparaginyl-[protein] + H2O = N(4)-(alpha-D-Man-(1-&gt;2)-alpha-D-Man-(1-&gt;2)-alpha-D-Man-(1-&gt;3)-[alpha-D-Man-(1-&gt;2)-alpha-D-Man-(1-&gt;3)-[alpha-D-Man-(1-&gt;2)-alpha-D-Man-(1-&gt;6)]-alpha-D-Man-(1-&gt;6)]-beta-D-Man-(1-&gt;4)-beta-D-GlcNAc-(1-&gt;4)-beta-D-GlcNAc)-L-asparaginyl-[protein] (N-glucan mannose isomer 9A1,2,3B1,2,3) + beta-D-glucose. The catalysed reaction is N(4)-(alpha-D-Glc-(1-&gt;3)-alpha-D-Glc-(1-&gt;3)-alpha-D-Man-(1-&gt;2)-alpha-D-Man-(1-&gt;2)-alpha-D-Man-(1-&gt;3)-[alpha-D-Man-(1-&gt;2)-alpha-D-Man-(1-&gt;3)-[alpha-D-Man-(1-&gt;2)-alpha-D-Man-(1-&gt;6)]-alpha-D-Man-(1-&gt;6)]-beta-D-Man-(1-&gt;4)-beta-D-GlcNAc-(1-&gt;4)-beta-D-GlcNAc)-L-asparaginyl-[protein] + H2O = N(4)-(alpha-D-Glc-(1-&gt;3)-alpha-D-Man-(1-&gt;2)-alpha-D-Man-(1-&gt;2)-alpha-D-Man-(1-&gt;3)-[alpha-D-Man-(1-&gt;2)-alpha-D-Man-(1-&gt;3)-[alpha-D-Man-(1-&gt;2)-alpha-D-Man-(1-&gt;6)]-alpha-D-Man-(1-&gt;6)]-beta-D-Man-(1-&gt;4)-beta-D-GlcNAc-(1-&gt;4)-beta-D-GlcNAc)-L-asparaginyl-[protein] + beta-D-glucose. The protein operates within glycan metabolism; N-glycan metabolism. Catalytic subunit of glucosidase 2, which cleaves sequentially the 2 innermost alpha-1,3-linked glucose residues from the Glc(2)Man(9)GlcNAc(2) oligosaccharide precursor of immature glycoproteins. The polypeptide is Glucosidase 2 subunit alpha (Schizosaccharomyces pombe (strain 972 / ATCC 24843) (Fission yeast)).